The following is a 398-amino-acid chain: UDP-N-acetylglucosamine--N-acetylmuramyl-(pentapeptide) pyrophosphoryl-undecaprenol N-acetylglucosamine transferase (398 aa).

UDP-N-acetyl-alpha-D-glucosamine is bound by residues 11–13 (TGG), N124, R164, S192, and Q318.

It belongs to the glycosyltransferase 28 family. MurG subfamily.

The protein localises to the cell membrane. The catalysed reaction is di-trans,octa-cis-undecaprenyl diphospho-N-acetyl-alpha-D-muramoyl-L-alanyl-D-glutamyl-meso-2,6-diaminopimeloyl-D-alanyl-D-alanine + UDP-N-acetyl-alpha-D-glucosamine = di-trans,octa-cis-undecaprenyl diphospho-[N-acetyl-alpha-D-glucosaminyl-(1-&gt;4)]-N-acetyl-alpha-D-muramoyl-L-alanyl-D-glutamyl-meso-2,6-diaminopimeloyl-D-alanyl-D-alanine + UDP + H(+). The protein operates within cell wall biogenesis; peptidoglycan biosynthesis. Functionally, cell wall formation. Catalyzes the transfer of a GlcNAc subunit on undecaprenyl-pyrophosphoryl-MurNAc-pentapeptide (lipid intermediate I) to form undecaprenyl-pyrophosphoryl-MurNAc-(pentapeptide)GlcNAc (lipid intermediate II). The chain is UDP-N-acetylglucosamine--N-acetylmuramyl-(pentapeptide) pyrophosphoryl-undecaprenol N-acetylglucosamine transferase from Deinococcus radiodurans (strain ATCC 13939 / DSM 20539 / JCM 16871 / CCUG 27074 / LMG 4051 / NBRC 15346 / NCIMB 9279 / VKM B-1422 / R1).